The chain runs to 329 residues: 4-hydroxythreonine-4-phosphate dehydrogenase (329 aa).

The substrate site is built by histidine 136 and threonine 137. Histidine 166, histidine 211, and histidine 266 together coordinate a divalent metal cation. The substrate site is built by lysine 274, asparagine 283, and arginine 292.

The protein belongs to the PdxA family. As to quaternary structure, homodimer. The cofactor is Zn(2+). Mg(2+) is required as a cofactor. Co(2+) serves as cofactor.

It is found in the cytoplasm. The catalysed reaction is 4-(phosphooxy)-L-threonine + NAD(+) = 3-amino-2-oxopropyl phosphate + CO2 + NADH. It functions in the pathway cofactor biosynthesis; pyridoxine 5'-phosphate biosynthesis; pyridoxine 5'-phosphate from D-erythrose 4-phosphate: step 4/5. In terms of biological role, catalyzes the NAD(P)-dependent oxidation of 4-(phosphooxy)-L-threonine (HTP) into 2-amino-3-oxo-4-(phosphooxy)butyric acid which spontaneously decarboxylates to form 3-amino-2-oxopropyl phosphate (AHAP). This is 4-hydroxythreonine-4-phosphate dehydrogenase from Escherichia coli O81 (strain ED1a).